The following is a 143-amino-acid chain: Transcriptional regulator MraZ (143 aa).

SpoVT-AbrB domains follow at residues 5–47 (EYSH…PMAV) and 76–119 (ALEA…SAEN).

It belongs to the MraZ family. As to quaternary structure, forms oligomers.

The protein localises to the cytoplasm. Its subcellular location is the nucleoid. The sequence is that of Transcriptional regulator MraZ from Leuconostoc mesenteroides subsp. mesenteroides (strain ATCC 8293 / DSM 20343 / BCRC 11652 / CCM 1803 / JCM 6124 / NCDO 523 / NBRC 100496 / NCIMB 8023 / NCTC 12954 / NRRL B-1118 / 37Y).